The following is a 628-amino-acid chain: Keratin, type II cytoskeletal 3 (628 aa).

Residues 1–21 form a disordered region; sequence MSRQASKTSGGGSQGFSGRSA. The head stretch occupies residues 1-197; sequence MSRQASKTSG…DPQIGQVKAQ (197 aa). S13 and S56 each carry phosphoserine. The segment at 198–233 is coil 1A; the sequence is EREQIKTLNNKFASFIDKVRFLEQQNKVLETKWNLL. One can recognise an IF rod domain in the interval 198-513; sequence EREQIKTLNN…KLLEGEEYRM (316 aa). The tract at residues 234 to 254 is linker 1; sequence QQQGTSSISGTNNLEPLFENH. The coil 1B stretch occupies residues 255–346; sequence INYLRSYLDN…TLYDAELSQM (92 aa). K296 bears the N6,N6-dimethyllysine mark. The segment at 347 to 370 is linker 12; it reads QSHISDTSVVLSMDNNRSLDLDSI. S364 bears the Phosphoserine mark. The segment at 371-509 is coil 2; that stretch reads IAEVRAQYED…ATYRKLLEGE (139 aa). The segment at 510-628 is tail; that stretch reads EYRMSGECPS…SSQSSQRYSR (119 aa). A disordered region spans residues 605 to 628; that stretch reads SSASNRGGSIKFSQSSQSSQRYSR. The span at 617 to 628 shows a compositional bias: low complexity; sequence SQSSQSSQRYSR.

It belongs to the intermediate filament family. In terms of assembly, heterotetramer of two type I and two type II keratins. Keratin-3 associates with keratin-12. In terms of tissue distribution, cornea specific.

The chain is Keratin, type II cytoskeletal 3 (KRT3) from Homo sapiens (Human).